A 37-amino-acid polypeptide reads, in one-letter code: MNSILIITSLLIIFSIFSHALIKLGIGISNNPDKTDV.

The chain crosses the membrane as a helical span at residues 4-24 (ILIITSLLIIFSIFSHALIKL).

It localises to the cell inner membrane. The sequence is that of Protein YnaM from Escherichia coli (strain K12).